The chain runs to 415 residues: UDP-N-acetylmuramoylalanine--D-glutamate ligase (415 aa).

Position 91–97 (91–97 (GTDGKST)) interacts with ATP.

The protein belongs to the MurCDEF family.

The protein localises to the cytoplasm. The catalysed reaction is UDP-N-acetyl-alpha-D-muramoyl-L-alanine + D-glutamate + ATP = UDP-N-acetyl-alpha-D-muramoyl-L-alanyl-D-glutamate + ADP + phosphate + H(+). It functions in the pathway cell wall biogenesis; peptidoglycan biosynthesis. Its function is as follows. Cell wall formation. Catalyzes the addition of glutamate to the nucleotide precursor UDP-N-acetylmuramoyl-L-alanine (UMA). This Aquifex aeolicus (strain VF5) protein is UDP-N-acetylmuramoylalanine--D-glutamate ligase.